Here is a 982-residue protein sequence, read N- to C-terminus: Serine/threonine-protein kinase SULU (982 aa).

The 260-residue stretch at 30–289 folds into the Protein kinase domain; that stretch reads YQDLREIGHG…AEECFRHPFI (260 aa). Residues 36-44 and Lys-59 each bind ATP; that span reads IGHGSFGAV. The active-site Proton acceptor is Asp-153. Disordered regions lie at residues 331–484, 592–620, 751–789, and 957–982; these read GKEG…PLDT, QNNE…QNQQ, LETQ…RDLK, and RTGS…QMAM. Positions 353-373 are enriched in low complexity; sequence SIGRAGDSASSRSASLTSFRS. The segment covering 421–431 has biased composition (polar residues); the sequence is QMLSSTSTSGV. A compositionally biased stretch (low complexity) spans 459–472; sequence IPTSQPTSKSESSS. The segment covering 595 to 608 has biased composition (basic and acidic residues); it reads ELDKRKKDIEDGEK. Residues 759 to 768 are compositionally biased toward polar residues; the sequence is SASQNEYTQR. Low complexity predominate over residues 957-967; sequence RTGSTSRSSGG. Residues 973-982 are compositionally biased toward polar residues; sequence GNSSSIQMAM.

Belongs to the protein kinase superfamily. Ser/Thr protein kinase family. STE20 subfamily. Mg(2+) is required as a cofactor. In terms of tissue distribution, expressed in the pharynx, including the pharyngeal muscle of the metacorpus, the isthmus, and the terminal bulb; in the intestine, including the pharyngeointestinal valve between the pharynx and the intestine, a structure near the anus likely to be the anal sphincter and the excretory cell and in several ring neurons.

Its subcellular location is the cytoplasm. The protein localises to the cytoskeleton. The protein resides in the cell cortex. The enzyme catalyses L-seryl-[protein] + ATP = O-phospho-L-seryl-[protein] + ADP + H(+). The catalysed reaction is L-threonyl-[protein] + ATP = O-phospho-L-threonyl-[protein] + ADP + H(+). Functionally, acts as a negative regulator of cortical contractions during early embryonic cell division, possibly by regulating rho-1-dependent actomyosin contractility. Plays a role in polarity establishment in early embryos by regulating the size of the anterior and posterior cortex in the first asymmetric cell division. Might play a role in cell cycle progression. In the germline, involved in the regulation of meiotic progression during oogenesis, possibly by modulating the timing of mpk-1 activation. Plays a role in meiotic recombination events. Involved in pharyngeal pumping. The chain is Serine/threonine-protein kinase SULU (kin-18) from Caenorhabditis elegans.